The primary structure comprises 395 residues: RNA polymerase II elongation factor ELL3 (395 aa).

Disordered stretches follow at residues L129 to M177 and P189 to E281. S242 bears the Phosphoserine mark. The segment covering Q243–G260 has biased composition (acidic residues). The span at S269–P279 shows a compositional bias: low complexity. The 111-residue stretch at P283–R393 folds into the OCEL domain.

The protein belongs to the ELL/occludin family. As to quaternary structure, component of the little elongation complex (LEC), at least composed of ELL (ELL, ELL2 or ELL3), ZC3H8, ICE1 and ICE2. Component of the super elongation complex (SEC), at least composed of EAF1, EAF2, CDK9, MLLT3/AF9, AFF (AFF1 or AFF4), the P-TEFb complex and ELL (ELL, ELL2 or ELL3). Interacts with AFF4. Actively expressed in embryonic stem cells (ES cells), while it is weakly expressed in differentiated cells.

The protein localises to the nucleus. Functionally, enhancer-binding elongation factor that specifically binds enhancers in embryonic stem cells (ES cells), marks them, and is required for their future activation during stem cell specification. Elongation factor component of the super elongation complex (SEC), a complex required to increase the catalytic rate of RNA polymerase II transcription by suppressing transient pausing by the polymerase at multiple sites along the DNA. Component of the little elongation complex (LEC), a complex required to regulate small nuclear RNA (snRNA) gene transcription by RNA polymerase II and III. Does not only bind to enhancer regions of active genes, but also marks the enhancers that are in a poised or inactive state in ES cells and is required for establishing proper RNA polymerase II occupancy at developmentally regulated genes in a cohesin-dependent manner. Probably required for priming developmentally regulated genes for later recruitment of the super elongation complex (SEC), for transcriptional activation during differentiation. Required for recruitment of P-TEFb within SEC during differentiation. Probably preloaded on germ cell chromatin, suggesting that it may prime gene activation by marking enhancers as early as in the germ cells. Promoting epithelial-mesenchymal transition (EMT). This is RNA polymerase II elongation factor ELL3 (Ell3) from Mus musculus (Mouse).